We begin with the raw amino-acid sequence, 430 residues long: Mannan endo-1,4-beta-mannosidase (430 aa).

Glu-173 serves as the catalytic Proton donor. Glu-269 functions as the Nucleophile in the catalytic mechanism. CBM10 domains follow at residues 357–390 (SCGTAPNGYPYCCNASSATGNGWGWENNRSCVVA) and 395–424 (SCNWYGTSYPICVNTSSGWGWENNRSCIAA).

The protein belongs to the glycosyl hydrolase 5 (cellulase A) family.

It carries out the reaction Random hydrolysis of (1-&gt;4)-beta-D-mannosidic linkages in mannans, galactomannans and glucomannans.. In terms of biological role, catalyzes the endo hydrolysis of beta-1,4-linked mannan, galactomannan and glucomannan. It is able to hydrolyze mannosidic linkages that are flanked by mannose or glucose. This Cellvibrio japonicus (strain Ueda107) (Pseudomonas fluorescens subsp. cellulosa) protein is Mannan endo-1,4-beta-mannosidase.